Here is a 1032-residue protein sequence, read N- to C-terminus: Toll-like receptor 9 (1032 aa).

The first 25 residues, 1–25 (MGFCRSALHPLSLLVQAIMLAMTLA), serve as a signal peptide directing secretion. At 26-818 (LGTLPAFLPC…CLDEALSWDC (793 aa)) the chain is on the extracellular side. An intrachain disulfide couples Cys-35 to Cys-45. 47-51 (WLFLK) serves as a coordination point for DNA. LRR repeat units lie at residues 62 to 85 (RGNV…DFAH), 87 to 110 (PSLR…HFPC), 122 to 147 (VPTL…SLIS), 150 to 166 (LSHT…LAGL), 167 to 190 (HALR…ALEV), 198 to 221 (LGNL…LPSS), 223 to 242 (EYLL…DLAN), 243 to 268 (LTAL…CMEC), 283 to 306 (LSRL…WFRG), 308 to 332 (GNLR…AFQG), 333 to 356 (LTQL…HLSL), 363 to 386 (LVAL…TLRP), 390 to 413 (LPML…IFRA), and 415 to 440 (PGLR…MGEA). N-linked (GlcNAc...) asparagine glycosylation is present at Asn-64. DNA contacts are provided by residues 72–77 (SNRIHH) and 95–109 (KWNC…MHFP). Cys-98 and Cys-110 form a disulfide bridge. A glycan (N-linked (GlcNAc...) asparagine) is linked at Asn-129. A DNA-binding site is contributed by Tyr-132. Residues Cys-178 and Cys-184 are joined by a disulfide bond. 179 to 181 (YYK) contacts DNA. N-linked (GlcNAc...) asparagine glycosylation occurs at Asn-200. Position 208 (Tyr-208) interacts with DNA. N-linked (GlcNAc...) asparagine glycans are attached at residues Asn-210 and Asn-242. Cystine bridges form between Cys-255-Cys-268 and Cys-258-Cys-265. S-palmitoyl cysteine attachment occurs at residues Cys-258 and Cys-265. An N-linked (GlcNAc...) asparagine glycan is attached at Asn-300. Asn-340 carries N-linked (GlcNAc...) asparagine glycosylation. Residues Asn-469, Asn-474, and Asn-513 are each glycosylated (N-linked (GlcNAc...) asparagine). 12 LRR repeats span residues 470–494 (CSTL…MFAQ), 496–519 (SHLQ…QFLP), 520–543 (LTGL…SFTE), 545–572 (PRLE…SFVA), 574–598 (LRTL…LCST), 600–622 (LRAL…LYLH), 627–650 (LSGL…TLRN), 652–675 (PKSL…SLHF), 676–699 (LPKL…SLPA), 701–723 (TRLR…FFSK), 724–747 (AKEL…WFGP), and 749–772 (ASAL…AFMD). An intrachain disulfide couples Cys-470 to Cys-500. Asn-567 carries N-linked (GlcNAc...) asparagine glycosylation. Asn-694 carries an N-linked (GlcNAc...) asparagine glycan. A glycan (N-linked (GlcNAc...) asparagine) is linked at Asn-731. Cystine bridges form between Cys-764-Cys-790 and Cys-766-Cys-809. The chain crosses the membrane as a helical span at residues 819 to 839 (FALSLLAVALGLGVPMLHHLC). The Cytoplasmic portion of the chain corresponds to 840–1032 (GWDLWYCFHL…RNFCQGPTAE (193 aa)). The region spanning 868 to 1013 (LPYDAFVVFD…SFWAQLGMAL (146 aa)) is the TIR domain.

This sequence belongs to the Toll-like receptor family. As to quaternary structure, monomer and homodimer. Exists as a monomer in the absence of unmethylated cytidine-phosphate-guanosine (CpG) ligand. Proteolytic processing of an insertion loop (Z-loop) is required for homodimerization upon binding to the unmethylated CpG ligand leading to its activation. Interacts with MYD88 via their respective TIR domains. Interacts with BTK. Interacts (via transmembrane domain) with UNC93B1. Interacts with CD300LH; the interaction may promote full activation of TLR9-triggered innate responses. Interacts with CNPY3 and HSP90B1; this interaction is required for proper folding in the endoplasmic reticulum. Interacts with SMPDL3B. Interacts with CD82; this interaction is essential for TLR9-dependent myddosome formation in response to CpG stimulation. In terms of processing, activated by proteolytic cleavage of the flexible loop between repeats LRR14 and LRR15 within the ectodomain. Cleavage requires UNC93B1. Proteolytically processed by first removing the majority of the ectodomain by either asparagine endopeptidase (AEP) or a cathepsin followed by a trimming event that is solely cathepsin mediated and required for optimal receptor signaling. Palmitoylated by ZDHHC3 in the Golgi regulates TLR9 trafficking from the Golgi to endosomes. Depalmitoylation by PPT1 controls the release of TLR9 from UNC93B1 in endosomes. As to expression, highly expressed in spleen, lymph node, tonsil and peripheral blood leukocytes, especially in plasmacytoid pre-dendritic cells. Levels are much lower in monocytes and CD11c+ immature dendritic cells. Also detected in lung and liver.

The protein localises to the endoplasmic reticulum membrane. The protein resides in the early endosome membrane. Its subcellular location is the lysosome. It is found in the cytoplasmic vesicle. It localises to the phagosome. The protein localises to the golgi apparatus membrane. Key component of innate and adaptive immunity. TLRs (Toll-like receptors) control host immune response against pathogens through recognition of molecular patterns specific to microorganisms. TLR9 is a nucleotide-sensing TLR which is activated by unmethylated cytidine-phosphate-guanosine (CpG) dinucleotides. Acts via MYD88 and TRAF6, leading to NF-kappa-B activation, cytokine secretion and the inflammatory response. Controls lymphocyte response to Helicobacter infection. Upon CpG stimulation, induces B-cell proliferation, activation, survival and antibody production. The polypeptide is Toll-like receptor 9 (TLR9) (Homo sapiens (Human)).